Reading from the N-terminus, the 333-residue chain is MRNACTRARLTRTARAMVKTLFIAIASVTFFFTSDLALPQSAAAYPFWAQQTYPETPREPTGRIVCANCHLAAKPTEVEVPQSVLPDTVFKAVVKIPYDTSVQQVGADGSKVGLNVGAVLMLPEGFKIAPEDRIPEELKEEIGDVYFQPYGEDKDNIVIVGPLPGEQYQEIVFPVLSPNPANDKNIHFGKYSVHVGGNRGRGQVYPTGEKSNNNLYSAAATGTISKIAKQEGEDGSVKYLVDIKTESGEVVSDTIPAGPELIVSEGQAVKAGDALTNNPNVGGFGQLDAEIVLQDANRVGWLIAFVALVMLAQVMLVLKKKQVEKVQAAEMNF.

The N-terminal stretch at 1–44 is a signal peptide; sequence MRNACTRARLTRTARAMVKTLFIAIASVTFFFTSDLALPQSAAA. Tyr-45, Cys-66, Cys-69, and His-70 together coordinate heme. The helical transmembrane segment at 299-318 threads the bilayer; sequence VGWLIAFVALVMLAQVMLVL.

This sequence belongs to the cytochrome f family. In terms of assembly, the 4 large subunits of the cytochrome b6-f complex are cytochrome b6, subunit IV (17 kDa polypeptide, PetD), cytochrome f and the Rieske protein, while the 4 small subunits are PetG, PetL, PetM and PetN. The complex functions as a dimer. Requires heme as cofactor.

It is found in the cellular thylakoid membrane. Functionally, component of the cytochrome b6-f complex, which mediates electron transfer between photosystem II (PSII) and photosystem I (PSI), cyclic electron flow around PSI, and state transitions. In Trichormus variabilis (strain ATCC 29413 / PCC 7937) (Anabaena variabilis), this protein is Cytochrome f.